The primary structure comprises 125 residues: Histone H2A (125 aa).

The span at 1-18 shows a compositional bias: basic residues; the sequence is MSGRGKGGKAKAKAKSRS. Residues 1–21 form a disordered region; it reads MSGRGKGGKAKAKAKSRSSRA. An N-acetylserine modification is found at Ser2. Residue Gln104 is modified to N5-methylglutamine.

This sequence belongs to the histone H2A family. As to quaternary structure, the nucleosome is a histone octamer containing two molecules each of H2A, H2B, H3 and H4 assembled in one H3-H4 heterotetramer and two H2A-H2B heterodimers. The octamer wraps approximately 147 bp of DNA.

Its subcellular location is the nucleus. It localises to the chromosome. Its function is as follows. Core component of nucleosome. Nucleosomes wrap and compact DNA into chromatin, limiting DNA accessibility to the cellular machineries which require DNA as a template. Histones thereby play a central role in transcription regulation, DNA repair, DNA replication and chromosomal stability. DNA accessibility is regulated via a complex set of post-translational modifications of histones, also called histone code, and nucleosome remodeling. This chain is Histone H2A, found in Mytilus californianus (California mussel).